We begin with the raw amino-acid sequence, 596 residues long: Invasin CotH7 (596 aa).

Positions 1 to 17 are cleaved as a signal peptide; it reads MKSLSFISLACLTAVHA. N-linked (GlcNAc...) asparagine glycans are attached at residues asparagine 82, asparagine 146, asparagine 163, asparagine 169, asparagine 288, asparagine 440, and asparagine 544. Over residues 528-544 the composition is skewed to low complexity; sequence SATIAAPATSESASQDN. A disordered region spans residues 528 to 557; the sequence is SATIAAPATSESASQDNTSDDTDSASTSSS. A lipid anchor (GPI-anchor amidated serine) is attached at serine 567. The propeptide at 568–596 is removed in mature form; sequence SASKSAPTFYCLQLVLYLSLSFKNLYKYI.

In terms of assembly, interacts with host integrin beta-1 ITGB1 on the cell surface of host alveolar epithelial cells.

It localises to the cell membrane. Functionally, promotes invasion of host epithelial cells by adhering to receptors on the host cell surface to facilitate endocytosis of the pathogen into host cells. Probably binds integrin ITGA3:ITGB1 via ITGB1, on the cell surface of host alveolar epithelial cells. This Rhizopus delemar (strain RA 99-880 / ATCC MYA-4621 / FGSC 9543 / NRRL 43880) (Mucormycosis agent) protein is Invasin CotH7.